We begin with the raw amino-acid sequence, 125 residues long: Large ribosomal subunit protein bL12 (125 aa).

This sequence belongs to the bacterial ribosomal protein bL12 family. Homodimer. Part of the ribosomal stalk of the 50S ribosomal subunit. Forms a multimeric L10(L12)X complex, where L10 forms an elongated spine to which 2 to 4 L12 dimers bind in a sequential fashion. Binds GTP-bound translation factors.

In terms of biological role, forms part of the ribosomal stalk which helps the ribosome interact with GTP-bound translation factors. Is thus essential for accurate translation. The protein is Large ribosomal subunit protein bL12 of Sphingopyxis alaskensis (strain DSM 13593 / LMG 18877 / RB2256) (Sphingomonas alaskensis).